The following is a 218-amino-acid chain: Peptide methionine sulfoxide reductase MsrA (218 aa).

Cysteine 57 is a catalytic residue.

The protein belongs to the MsrA Met sulfoxide reductase family.

The catalysed reaction is L-methionyl-[protein] + [thioredoxin]-disulfide + H2O = L-methionyl-(S)-S-oxide-[protein] + [thioredoxin]-dithiol. It catalyses the reaction [thioredoxin]-disulfide + L-methionine + H2O = L-methionine (S)-S-oxide + [thioredoxin]-dithiol. Functionally, has an important function as a repair enzyme for proteins that have been inactivated by oxidation. Catalyzes the reversible oxidation-reduction of methionine sulfoxide in proteins to methionine. The sequence is that of Peptide methionine sulfoxide reductase MsrA from Brucella suis biovar 1 (strain 1330).